Consider the following 125-residue polypeptide: Histone H2A (125 aa).

A compositionally biased stretch (basic residues) spans Met-1–Ser-18. Positions Met-1–Leu-23 are disordered. Residue Ser-2 is modified to N-acetylserine. Gln-104 is modified (N5-methylglutamine).

The protein belongs to the histone H2A family. In terms of assembly, the nucleosome is a histone octamer containing two molecules each of H2A, H2B, H3 and H4 assembled in one H3-H4 heterotetramer and two H2A-H2B heterodimers. The octamer wraps approximately 147 bp of DNA.

It is found in the nucleus. It localises to the chromosome. Core component of nucleosome. Nucleosomes wrap and compact DNA into chromatin, limiting DNA accessibility to the cellular machineries which require DNA as a template. Histones thereby play a central role in transcription regulation, DNA repair, DNA replication and chromosomal stability. DNA accessibility is regulated via a complex set of post-translational modifications of histones, also called histone code, and nucleosome remodeling. The chain is Histone H2A from Sepia officinalis (Common cuttlefish).